Consider the following 390-residue polypeptide: Chalcone synthase (390 aa).

Cys-164 is a catalytic residue.

The protein belongs to the thiolase-like superfamily. Chalcone/stilbene synthases family.

The catalysed reaction is (E)-4-coumaroyl-CoA + 3 malonyl-CoA + 3 H(+) = 2',4,4',6'-tetrahydroxychalcone + 3 CO2 + 4 CoA. The protein operates within secondary metabolite biosynthesis; flavonoid biosynthesis. The primary product of this enzyme is 4,2',4',6'-tetrahydroxychalcone (also termed naringenin-chalcone or chalcone) which can under specific conditions spontaneously isomerize into naringenin. In Antirrhinum majus (Garden snapdragon), this protein is Chalcone synthase (CHS).